Reading from the N-terminus, the 578-residue chain is Potassium-transporting ATPase potassium-binding subunit (578 aa).

Transmembrane regions (helical) follow at residues 3–23 (NAIL…IPLG), 65–85 (SFSV…LNLL), 134–154 (GLTV…FALI), 175–195 (IVLY…VSQG), 261–281 (FSNL…CFTF), 293–313 (AIFI…GVSE), 397–417 (GLYG…LMVG), 435–455 (AMLI…LASI), 503–523 (IGLI…AIAG), and 543–563 (LLFI…SFFP).

This sequence belongs to the KdpA family. The system is composed of three essential subunits: KdpA, KdpB and KdpC.

The protein localises to the cell membrane. In terms of biological role, part of the high-affinity ATP-driven potassium transport (or Kdp) system, which catalyzes the hydrolysis of ATP coupled with the electrogenic transport of potassium into the cytoplasm. This subunit binds the extracellular potassium ions and delivers the ions to the membrane domain of KdpB through an intramembrane tunnel. This Clostridium perfringens (strain ATCC 13124 / DSM 756 / JCM 1290 / NCIMB 6125 / NCTC 8237 / Type A) protein is Potassium-transporting ATPase potassium-binding subunit.